The primary structure comprises 127 residues: Protein yippee-like 4 (127 aa).

Residues 27 to 124 form the Yippee domain; it reads RTYSCVHCRA…IEMSHMVKDN (98 aa). Residues Cys31, Cys34, Cys87, and Cys90 each contribute to the Zn(2+) site. Residues Thr92 and Thr93 each carry the phosphothreonine modification. Phosphotyrosine is present on Tyr98.

The protein belongs to the yippee family. Detected in brain, spleen and testis.

It is found in the nucleus. Its subcellular location is the nucleolus. The polypeptide is Protein yippee-like 4 (Ypel4) (Mus musculus (Mouse)).